Consider the following 614-residue polypeptide: Two-component response regulator ORR33 (614 aa).

One can recognise a Response regulatory domain in the interval 14 to 139; it reads RVMIIDDDAK…VMARLWRVVA (126 aa). At Asp67 the chain carries 4-aspartylphosphate. The interval 193-220 is disordered; sequence RQLTINVVDDGNRGSGSGGGGGGGADAN. Gly residues predominate over residues 205–217; sequence RGSGSGGGGGGGA.

The protein belongs to the ARR family. Type-B subfamily. In terms of processing, two-component system major event consists of a His-to-Asp phosphorelay between a sensor histidine kinase (HK) and a response regulator (RR). In plants, the His-to-Asp phosphorelay involves an additional intermediate named Histidine-containing phosphotransfer protein (HPt). This multistep phosphorelay consists of a His-Asp-His-Asp sequential transfer of a phosphate group between first a His and an Asp of the HK protein, followed by the transfer to a conserved His of the HPt protein and finally the transfer to an Asp in the receiver domain of the RR protein.

Its function is as follows. Functions as a response regulator involved in His-to-Asp phosphorelay signal transduction system. Phosphorylation of the Asp residue in the receiver domain activates the ability of the protein to promote the transcription of target genes. May directly activate some type-A response regulators in response to cytokinins. In Oryza sativa subsp. indica (Rice), this protein is Two-component response regulator ORR33.